Consider the following 66-residue polypeptide: MEHSLNSLNNFDFLARSFARMHAEGRPVDILAVTGNMDEEHRTWFCARYAWYCQQMMQARELELEH.

This sequence belongs to the GlgS family.

Its function is as follows. Major determinant of cell surface composition. Negatively regulates motility, adhesion and synthesis of biofilm exopolysaccharides. In Shigella flexneri, this protein is Surface composition regulator.